A 499-amino-acid polypeptide reads, in one-letter code: Trichothecene C-4 hydroxylase (499 aa).

The helical transmembrane segment at 7 to 29 threads the bilayer; the sequence is VGVAVQLVLTVLLASIPLRVIWN. N-linked (GlcNAc...) asparagine glycans are attached at residues Asn-173 and Asn-287. Residue Cys-442 participates in heme binding. N-linked (GlcNAc...) asparagine glycosylation occurs at Asn-473.

The protein belongs to the cytochrome P450 family. Heme serves as cofactor.

Its subcellular location is the membrane. The protein operates within sesquiterpene biosynthesis; trichothecene biosynthesis. Functionally, trichothecene C-4 hydroxylase; part of the gene cluster that mediates the production of the antimicrobial trichothecene harzianum A (HA) that plays a role in Botrytis cinerea antagonistic activity and plant defense priming. The biosynthesis of harzianum A begins with the cyclization of farnesyl diphosphate to trichodiene and is catalyzed by the trichodiene synthase TRI5. Trichodiene undergoes a series of oxygenations catalyzed by the cytochrome P450 monooxygenase TRI4. TRI4 controls the addition of 3 oxygens at C-2, C-11, and the C-12, C-13-epoxide to form the intermediate isotrichodiol. Isotrichodiol then undergoes a non-enzymatic isomerization and cyclization to form 12,13-epoxytrichothec-9-ene (EPT) which is further converted to trichodermol by the cytochrome P450 monooxygenase TRI11 via C-4 hydroxylation. The last step of HA synthesis is esterification of an octatriendioyl moiety to the C-4 oxygen of trichodermol. The octatriendioyl moiety is probably produced by the polyketide synthase TRI17 and the esterification performed by the trichothecene O-acetyltransferase TRI3. This Trichoderma arundinaceum protein is Trichothecene C-4 hydroxylase.